The primary structure comprises 61 residues: uncharacterized protein (61 aa).

The interval 38 to 61 (TPRPFTPGLADPRRLGPRRVQAAQ) is disordered.

This is an uncharacterized protein from Homo sapiens (Human).